The sequence spans 357 residues: Arginine kinase (357 aa).

The 83-residue stretch at K9–G91 folds into the Phosphagen kinase N-terminal domain. G64 to Y68 is a substrate binding site. The 238-residue stretch at F119 to A356 folds into the Phosphagen kinase C-terminal domain. ATP is bound by residues S122–R126 and H185. E225 lines the substrate pocket. R229 contacts ATP. C271 contributes to the substrate binding site. Residues R280–H284 and R309–E314 each bind ATP. Position 314 (E314) interacts with substrate.

The protein belongs to the ATP:guanido phosphotransferase family. Monomer.

The protein localises to the cytoplasm. The catalysed reaction is L-arginine + ATP = N(omega)-phospho-L-arginine + ADP + H(+). Its function is as follows. Catalyzes the reversible transfer of the terminal phosphoryl group of ATP to L-arginine. This chain is Arginine kinase, found in Limulus polyphemus (Atlantic horseshoe crab).